Consider the following 183-residue polypeptide: Der GTPase-activating protein YihI (183 aa).

The interval 1 to 101 is disordered; the sequence is MSRSKKTRKG…KLTDEQKLLK (101 aa). 2 stretches are compositionally biased toward basic and acidic residues: residues 22–46 and 92–101; these read KKQDRAEVTGKRAEKGNKSGSRHNE and KLTDEQKLLK.

The protein belongs to the YihI family. As to quaternary structure, interacts with Der.

Its function is as follows. A GTPase-activating protein (GAP) that modifies Der/EngA GTPase function. May play a role in ribosome biogenesis. This Shewanella oneidensis (strain ATCC 700550 / JCM 31522 / CIP 106686 / LMG 19005 / NCIMB 14063 / MR-1) protein is Der GTPase-activating protein YihI.